The sequence spans 199 residues: NAD(P)H dehydrogenase (quinone) (199 aa).

The Flavodoxin-like domain maps to 4–190 (VLVLYYSTYG…DGARFLGQHV (187 aa)). FMN contacts are provided by residues 10 to 15 (STYGHI) and 78 to 80 (TRF). Tyr-12 is a binding site for NAD(+). Position 98 (Trp-98) interacts with substrate. FMN-binding positions include 113–119 (STATQHG) and His-134.

This sequence belongs to the WrbA family. The cofactor is FMN.

The enzyme catalyses a quinone + NADH + H(+) = a quinol + NAD(+). The catalysed reaction is a quinone + NADPH + H(+) = a quinol + NADP(+). This Gluconacetobacter diazotrophicus (strain ATCC 49037 / DSM 5601 / CCUG 37298 / CIP 103539 / LMG 7603 / PAl5) protein is NAD(P)H dehydrogenase (quinone).